The following is a 392-amino-acid chain: Succinate--CoA ligase [ADP-forming] subunit beta (392 aa).

The 239-residue stretch at 9–247 (KAILRKYGVA…VTEEDPLEVE (239 aa)) folds into the ATP-grasp domain. Residues Lys49, 56–58 (GRG), Glu102, Leu105, and Glu110 contribute to the ATP site. Mg(2+) is bound by residues Asn202 and Asp216. Substrate contacts are provided by residues Asn267 and 324–326 (GIL).

It belongs to the succinate/malate CoA ligase beta subunit family. As to quaternary structure, heterotetramer of two alpha and two beta subunits. Mg(2+) serves as cofactor.

It catalyses the reaction succinate + ATP + CoA = succinyl-CoA + ADP + phosphate. The catalysed reaction is GTP + succinate + CoA = succinyl-CoA + GDP + phosphate. It functions in the pathway carbohydrate metabolism; tricarboxylic acid cycle; succinate from succinyl-CoA (ligase route): step 1/1. In terms of biological role, succinyl-CoA synthetase functions in the citric acid cycle (TCA), coupling the hydrolysis of succinyl-CoA to the synthesis of either ATP or GTP and thus represents the only step of substrate-level phosphorylation in the TCA. The beta subunit provides nucleotide specificity of the enzyme and binds the substrate succinate, while the binding sites for coenzyme A and phosphate are found in the alpha subunit. The sequence is that of Succinate--CoA ligase [ADP-forming] subunit beta from Koribacter versatilis (strain Ellin345).